A 247-amino-acid polypeptide reads, in one-letter code: MADS-box protein defh21 (247 aa).

The region spanning methionine 1–proline 61 is the MADS-box domain. Positions asparagine 91–glutamine 183 constitute a K-box domain.

As to expression, expressed exclusively in a few inner cell layers of the inner integuments of the ovules.

Its subcellular location is the nucleus. Its function is as follows. Probable transcription factor. This chain is MADS-box protein defh21 (DEFH21), found in Antirrhinum majus (Garden snapdragon).